We begin with the raw amino-acid sequence, 452 residues long: 23S rRNA (uracil(1939)-C(5))-methyltransferase RlmD (452 aa).

A disordered region spans residues 1 to 25 (MSKKKSNSGLRFQPAGGNRTPQVPV). The TRAM domain occupies 22–80 (QVPVGKKQRLDIERLAGDGRGIAFLDGRTWFVSGALAGEAVEARVLNARGKVVEARLER). Positions 93, 99, 102, and 181 each coordinate [4Fe-4S] cluster. Gln285, Phe314, Asn319, Glu335, Asp362, and Asp383 together coordinate S-adenosyl-L-methionine. Cys409 (nucleophile) is an active-site residue.

It belongs to the class I-like SAM-binding methyltransferase superfamily. RNA M5U methyltransferase family. RlmD subfamily.

It catalyses the reaction uridine(1939) in 23S rRNA + S-adenosyl-L-methionine = 5-methyluridine(1939) in 23S rRNA + S-adenosyl-L-homocysteine + H(+). Its function is as follows. Catalyzes the formation of 5-methyl-uridine at position 1939 (m5U1939) in 23S rRNA. This is 23S rRNA (uracil(1939)-C(5))-methyltransferase RlmD from Pseudomonas putida (strain ATCC 47054 / DSM 6125 / CFBP 8728 / NCIMB 11950 / KT2440).